A 314-amino-acid polypeptide reads, in one-letter code: Hydroxyacyl-coenzyme A dehydrogenase, mitochondrial (314 aa).

The transit peptide at 1-12 (MAFVTRQFMRSV) directs the protein to the mitochondrion. NAD(+) is bound by residues 34-39 (GGGLMG) and Asp57. CoA-binding residues include Ser73 and Lys80. Residue Lys80 is modified to N6-succinyllysine. N6-acetyllysine; alternate is present on residues Lys81 and Lys87. An N6-succinyllysine; alternate mark is found at Lys81 and Lys87. Glu122 is a binding site for NAD(+). Lys125 is subject to N6-acetyllysine. Lys127 is an NAD(+) binding site. The residue at position 127 (Lys127) is an N6-(2-hydroxyisobutyryl)lysine. Position 136 is an N6-acetyllysine; alternate (Lys136). Lys136 carries the post-translational modification N6-succinyllysine; alternate. Ser149 and Asn173 together coordinate NAD(+). A CoA-binding site is contributed by Ser149. Lys179 carries the N6-acetyllysine modification. N6-acetyllysine; alternate is present on residues Lys185, Lys192, and Lys202. 3 positions are modified to N6-succinyllysine; alternate: Lys185, Lys192, and Lys202. Lys206 bears the N6-succinyllysine mark. Lys212 and Lys241 each carry N6-acetyllysine; alternate. Lys212 and Lys241 each carry N6-succinyllysine; alternate. An NAD(+)-binding site is contributed by Lys305. Lys312 bears the N6-acetyllysine; alternate mark. Lys312 carries the post-translational modification N6-succinyllysine; alternate.

The protein belongs to the 3-hydroxyacyl-CoA dehydrogenase family. Homodimer. Interacts with GLUD1; this interaction inhibits the activation of glutamate dehydrogenase 1 (GLUD1). Succinylation at Lys-81, adjacent to a coenzyme A binding site. Desuccinylated by SIRT5. Expressed in liver, kidney, pancreas, heart and skeletal muscle.

The protein localises to the mitochondrion matrix. It carries out the reaction a (3S)-3-hydroxyacyl-CoA + NAD(+) = a 3-oxoacyl-CoA + NADH + H(+). The catalysed reaction is (3S)-3-hydroxybutanoyl-CoA + NAD(+) = acetoacetyl-CoA + NADH + H(+). The enzyme catalyses (3S)-hydroxydecanoyl-CoA + NAD(+) = 3-oxodecanoyl-CoA + NADH + H(+). It catalyses the reaction (3S)-hydroxyhexadecanoyl-CoA + NAD(+) = 3-oxohexadecanoyl-CoA + NADH + H(+). It participates in lipid metabolism; fatty acid beta-oxidation. In terms of biological role, mitochondrial fatty acid beta-oxidation enzyme that catalyzes the third step of the beta-oxidation cycle for medium and short-chain 3-hydroxy fatty acyl-CoAs (C4 to C10). Plays a role in the control of insulin secretion by inhibiting the activation of glutamate dehydrogenase 1 (GLUD1), an enzyme that has an important role in regulating amino acid-induced insulin secretion. Plays a role in the maintenance of normal spermatogenesis through the reduction of fatty acid accumulation in the testes. This Homo sapiens (Human) protein is Hydroxyacyl-coenzyme A dehydrogenase, mitochondrial (HADH).